A 205-amino-acid chain; its full sequence is Thymidylate kinase (205 aa).

Residue 10 to 17 (GIDGAGKT) participates in ATP binding.

Belongs to the thymidylate kinase family.

The catalysed reaction is dTMP + ATP = dTDP + ADP. In terms of biological role, phosphorylation of dTMP to form dTDP in both de novo and salvage pathways of dTTP synthesis. In Nitrosospira multiformis (strain ATCC 25196 / NCIMB 11849 / C 71), this protein is Thymidylate kinase.